A 629-amino-acid chain; its full sequence is tRNA uridine 5-carboxymethylaminomethyl modification enzyme MnmG (629 aa).

Residues 13-18 (GGGHAG), valine 125, and serine 180 contribute to the FAD site. 273-287 (GPRYCPSIEDKVMRF) is an NAD(+) binding site. Glutamine 370 provides a ligand contact to FAD.

The protein belongs to the MnmG family. Homodimer. Heterotetramer of two MnmE and two MnmG subunits. The cofactor is FAD.

The protein localises to the cytoplasm. Its function is as follows. NAD-binding protein involved in the addition of a carboxymethylaminomethyl (cmnm) group at the wobble position (U34) of certain tRNAs, forming tRNA-cmnm(5)s(2)U34. This is tRNA uridine 5-carboxymethylaminomethyl modification enzyme MnmG from Salmonella paratyphi A (strain ATCC 9150 / SARB42).